A 113-amino-acid chain; its full sequence is Protein translation factor SUI1 homolog 1 (113 aa).

The disordered stretch occupies residues 1-24 (MSELDSQVPTAFDPFADANAEDSG). Ser-2 bears the N-acetylserine mark.

Belongs to the SUI1 family.

In terms of biological role, probably involved in translation. The polypeptide is Protein translation factor SUI1 homolog 1 (Arabidopsis thaliana (Mouse-ear cress)).